The following is a 353-amino-acid chain: Photosystem II protein D1 (353 aa).

T2 bears the N-acetylthreonine mark. At T2 the chain carries Phosphothreonine. 3 consecutive transmembrane segments (helical) span residues 29–46 (YIGW…TATS), 118–133 (HFLL…EWEL), and 142–156 (WIAV…AATA). H118 serves as a coordination point for chlorophyll a. Y126 provides a ligand contact to pheophytin a. Residues D170 and E189 each coordinate [CaMn4O5] cluster. Residues 197-218 (FHMLGVAGVFGGSLFSAMHGSL) traverse the membrane as a helical segment. A chlorophyll a-binding site is contributed by H198. Residues H215 and 264–265 (SF) each bind a quinone. H215 contributes to the Fe cation binding site. H272 provides a ligand contact to Fe cation. The helical transmembrane segment at 274–288 (FLAAWPVVGIWFTAL) threads the bilayer. [CaMn4O5] cluster is bound by residues H332, E333, D342, and A344. Positions 345 to 353 (AIEAPSTNG) are excised as a propeptide.

Belongs to the reaction center PufL/M/PsbA/D family. PSII is composed of 1 copy each of membrane proteins PsbA, PsbB, PsbC, PsbD, PsbE, PsbF, PsbH, PsbI, PsbJ, PsbK, PsbL, PsbM, PsbT, PsbX, PsbY, PsbZ, Psb30/Ycf12, at least 3 peripheral proteins of the oxygen-evolving complex and a large number of cofactors. It forms dimeric complexes. Requires The D1/D2 heterodimer binds P680, chlorophylls that are the primary electron donor of PSII, and subsequent electron acceptors. It shares a non-heme iron and each subunit binds pheophytin, quinone, additional chlorophylls, carotenoids and lipids. D1 provides most of the ligands for the Mn4-Ca-O5 cluster of the oxygen-evolving complex (OEC). There is also a Cl(-1) ion associated with D1 and D2, which is required for oxygen evolution. The PSII complex binds additional chlorophylls, carotenoids and specific lipids. as cofactor. Post-translationally, tyr-161 forms a radical intermediate that is referred to as redox-active TyrZ, YZ or Y-Z. In terms of processing, C-terminally processed by CTPA; processing is essential to allow assembly of the oxygen-evolving complex and thus photosynthetic growth.

The protein resides in the plastid. It localises to the chloroplast thylakoid membrane. It catalyses the reaction 2 a plastoquinone + 4 hnu + 2 H2O = 2 a plastoquinol + O2. Photosystem II (PSII) is a light-driven water:plastoquinone oxidoreductase that uses light energy to abstract electrons from H(2)O, generating O(2) and a proton gradient subsequently used for ATP formation. It consists of a core antenna complex that captures photons, and an electron transfer chain that converts photonic excitation into a charge separation. The D1/D2 (PsbA/PsbD) reaction center heterodimer binds P680, the primary electron donor of PSII as well as several subsequent electron acceptors. The polypeptide is Photosystem II protein D1 (Gossypium barbadense (Sea Island cotton)).